The following is a 440-amino-acid chain: Gap junction alpha-8 protein (440 aa).

Residues 2 to 12 (GDWSFLGNILE) lie within the membrane without spanning it. Residues 13 to 21 (EVNEHSTVI) are Cytoplasmic-facing. A helical transmembrane segment spans residues 22-42 (GRVWLTVLFIFRILILGTAAE). Residues 43-71 (FVWGDEQSDFVCNTQQPGCENVCYDEAFP) lie on the Extracellular side of the membrane. 3 cysteine pairs are disulfide-bonded: C54–C201, C61–C195, and C65–C190. A helical transmembrane segment spans residues 72-92 (ISHIRLWVLQIIFVSTPSLMY). The Cytoplasmic segment spans residues 93–161 (VGHAVHHVRM…GTLLRTYVCH (69 aa)). Positions 111–143 (AEELCQQSRSNGGERVPIAPDQASIRKSSSSSK) are disordered. The chain crosses the membrane as a helical span at residues 162–182 (IIFKTLFEVGFIVGHYFLYGF). Topologically, residues 183–210 (RILPLYRCSRWPCPNVVDCFVSRPTEKT) are extracellular. The helical transmembrane segment at 211 to 231 (IFILFMLSVAFVSLFLNIMEM) threads the bilayer. The Cytoplasmic segment spans residues 232–440 (SHLGMKGIRS…SRARSDDLTI (209 aa)). The disordered stretch occupies residues 338–440 (VEREEPPIEE…SRARSDDLTI (103 aa)). Composition is skewed to basic and acidic residues over residues 353–364 (VGEKKQEAEKVA) and 374–399 (PDRE…EKVT). Over residues 423 to 432 (LSRLSKASSR) the composition is skewed to low complexity.

Belongs to the connexin family. Alpha-type (group II) subfamily. As to quaternary structure, a hemichannel or connexon is composed of a hexamer of connexins. A functional gap junction is formed by the apposition of two hemichannels. Forms heteromeric channels with GJA3. As to expression, detected in eye lens (at protein level). Eye lens.

It localises to the cell membrane. The protein resides in the cell junction. Its subcellular location is the gap junction. In terms of biological role, structural component of eye lens gap junctions. Gap junctions are dodecameric channels that connect the cytoplasm of adjoining cells. They are formed by the docking of two hexameric hemichannels, one from each cell membrane. Small molecules and ions diffuse from one cell to a neighboring cell via the central pore. This is Gap junction alpha-8 protein (Gja8) from Mus musculus (Mouse).